A 332-amino-acid chain; its full sequence is Cyclin-dependent kinase 1 (332 aa).

The Protein kinase domain maps to 22-312; the sequence is FTKLEKIGEG…AKKALVHPYF (291 aa). Residues 28–36 and Lys-51 each bind ATP; that span reads IGEGTYGVV. At Thr-32 the chain carries Phosphothreonine. Phosphotyrosine is present on Tyr-33. The Proton acceptor role is filled by Asp-146.

It belongs to the protein kinase superfamily. CMGC Ser/Thr protein kinase family. CDC2/CDKX subfamily. In terms of assembly, forms a stable but non-covalent complex with a regulatory subunit and with a cyclin. Interacts with cks-1. Phosphorylated.

The protein localises to the nucleus. Its subcellular location is the cytoplasm. It localises to the cytoskeleton. It is found in the microtubule organizing center. The protein resides in the centrosome. The protein localises to the chromosome. It catalyses the reaction L-seryl-[protein] + ATP = O-phospho-L-seryl-[protein] + ADP + H(+). The enzyme catalyses L-threonyl-[protein] + ATP = O-phospho-L-threonyl-[protein] + ADP + H(+). The catalysed reaction is [DNA-directed RNA polymerase] + ATP = phospho-[DNA-directed RNA polymerase] + ADP + H(+). With respect to regulation, phosphorylation both activates and inactivates the enzyme depending on the site of phosphorylation. Plays a key role in the control of the eukaryotic cell cycle. Required for entry into S-phase and mitosis. Acts as a component of the kinase complex that phosphorylates the repetitive C-terminus of RNA polymerase II. May function in concert with npp-16 to arrest prophase blastomeres in response to anoxia. This Caenorhabditis elegans protein is Cyclin-dependent kinase 1 (cdk-1).